The following is a 273-amino-acid chain: Putative peptidyl-prolyl cis-trans isomerase Cbf2 (273 aa).

The N-terminal stretch at Met1–Ala21 is a signal peptide. Positions Pro131–Asn228 constitute a PpiC domain.

The catalysed reaction is [protein]-peptidylproline (omega=180) = [protein]-peptidylproline (omega=0). The protein is Putative peptidyl-prolyl cis-trans isomerase Cbf2 (cbf2) of Campylobacter jejuni subsp. jejuni serotype O:23/36 (strain 81-176).